A 151-amino-acid polypeptide reads, in one-letter code: Small ribosomal subunit protein uS11 (151 aa).

Residues 129–151 (IEDVTPVPSDSTRRKGGRRGRRL) form a disordered region. Residues 142 to 151 (RKGGRRGRRL) are compositionally biased toward basic residues.

It belongs to the universal ribosomal protein uS11 family.

This is Small ribosomal subunit protein uS11 (RPS14) from Procambarus clarkii (Red swamp crayfish).